Here is a 662-residue protein sequence, read N- to C-terminus: DNA ligase (662 aa).

NAD(+) is bound by residues 34–38 (DYDYD), 83–84 (SI), and Glu113. Lys115 functions as the N6-AMP-lysine intermediate in the catalytic mechanism. Arg136, Glu172, Lys286, and Lys310 together coordinate NAD(+). Zn(2+)-binding residues include Cys404, Cys407, Cys422, and Cys427. A BRCT domain is found at 583 to 662 (RASASCQGKT…SDLLKILYPN (80 aa)).

The protein belongs to the NAD-dependent DNA ligase family. LigA subfamily. The cofactor is Mg(2+). Mn(2+) is required as a cofactor.

It carries out the reaction NAD(+) + (deoxyribonucleotide)n-3'-hydroxyl + 5'-phospho-(deoxyribonucleotide)m = (deoxyribonucleotide)n+m + AMP + beta-nicotinamide D-nucleotide.. Its function is as follows. DNA ligase that catalyzes the formation of phosphodiester linkages between 5'-phosphoryl and 3'-hydroxyl groups in double-stranded DNA using NAD as a coenzyme and as the energy source for the reaction. It is essential for DNA replication and repair of damaged DNA. The polypeptide is DNA ligase (Chlamydia felis (strain Fe/C-56) (Chlamydophila felis)).